The primary structure comprises 232 residues: Ribose-5-phosphate isomerase A (232 aa).

Substrate contacts are provided by residues 28 to 31, 83 to 86, and 96 to 99; these read TGST, DGAD, and KGGG. The active-site Proton acceptor is Glu105. Lys123 contributes to the substrate binding site.

Belongs to the ribose 5-phosphate isomerase family. As to quaternary structure, homodimer.

The catalysed reaction is aldehydo-D-ribose 5-phosphate = D-ribulose 5-phosphate. The protein operates within carbohydrate degradation; pentose phosphate pathway; D-ribose 5-phosphate from D-ribulose 5-phosphate (non-oxidative stage): step 1/1. Catalyzes the reversible conversion of ribose-5-phosphate to ribulose 5-phosphate. The sequence is that of Ribose-5-phosphate isomerase A from Rhizobium etli (strain CIAT 652).